Reading from the N-terminus, the 298-residue chain is Myozenin-1 (298 aa).

Residues 1–34 (MPLSGTPAPNKKRKSSKLIMELTGGGQESSGLNL) are disordered. Residue Ser82 is modified to Phosphoserine. The interval 105-173 (FSYSKGSSGG…TGTGDQAGGE (69 aa)) is disordered. Residues 118-129 (GSSSAGQYGSGQ) are compositionally biased toward low complexity. The span at 136–172 (SGSGSGGAGGPGSQTGRGGDAGTTGVGETGTGDQAGG) shows a compositional bias: gly residues.

It belongs to the myozenin family. As to quaternary structure, interacts with ACTN2, ACTN3, FLNA, FLNB, FLNC, LDB3, PPP3CA and TCAP. Interacts via its C-terminal region with MYOT.

The protein resides in the nucleus. It is found in the cell projection. The protein localises to the pseudopodium. Myozenins may serve as intracellular binding proteins involved in linking Z-disk proteins such as alpha-actinin, gamma-filamin, TCAP/telethonin, LDB3/ZASP and localizing calcineurin signaling to the sarcomere. Plays an important role in the modulation of calcineurin signaling. May play a role in myofibrillogenesis. The polypeptide is Myozenin-1 (MYOZ1) (Sus scrofa (Pig)).